A 906-amino-acid chain; its full sequence is NADH-quinone oxidoreductase subunit G (906 aa).

The 2Fe-2S ferredoxin-type domain occupies 2 to 83 (AKIYVDSKIY…GAIISIKSTE (82 aa)). 4 residues coordinate [2Fe-2S] cluster: Cys-34, Cys-45, Cys-48, and Cys-67. A 4Fe-4S His(Cys)3-ligated-type domain is found at 83–122 (ESEVFRSAIVELLLTNHPHDCPVCEEGGHCHLQDMTVMVK). 12 residues coordinate [4Fe-4S] cluster: His-99, Cys-103, Cys-106, Cys-112, Cys-151, Cys-154, Cys-157, Cys-201, Cys-228, Cys-231, Cys-235, and Cys-263. The 57-residue stretch at 221–277 (MQYAPGICHNCSVGCNISIGERYGEIRRIENRYHENINHYLICDLGRFGYSHTNLNT) folds into the 4Fe-4S Mo/W bis-MGD-type domain.

Belongs to the complex I 75 kDa subunit family. Composed of 13 different subunits. Subunits NuoCD, E, F, and G constitute the peripheral sector of the complex. Requires [2Fe-2S] cluster as cofactor. [4Fe-4S] cluster serves as cofactor.

It carries out the reaction a quinone + NADH + 5 H(+)(in) = a quinol + NAD(+) + 4 H(+)(out). Its function is as follows. NDH-1 shuttles electrons from NADH, via FMN and iron-sulfur (Fe-S) centers, to quinones in the respiratory chain. Couples the redox reaction to proton translocation (for every two electrons transferred, four hydrogen ions are translocated across the cytoplasmic membrane), and thus conserves the redox energy in a proton gradient. The polypeptide is NADH-quinone oxidoreductase subunit G (nuoG) (Buchnera aphidicola subsp. Acyrthosiphon pisum (strain APS) (Acyrthosiphon pisum symbiotic bacterium)).